A 339-amino-acid chain; its full sequence is ADP-L-glycero-D-manno-heptose-6-epimerase (339 aa).

Residues 11-12 (FI), 32-33 (DD), K39, K54, 75-79 (EGACS), and N92 contribute to the NADP(+) site. The active-site Proton acceptor is the Y139. K143 contributes to the NADP(+) binding site. N170 is a binding site for substrate. Residues V171 and K179 each contribute to the NADP(+) site. K179 acts as the Proton acceptor in catalysis. Substrate-binding positions include R181, H188, 202–205 (FGEY), R215, and Y294.

The protein belongs to the NAD(P)-dependent epimerase/dehydratase family. HldD subfamily. In terms of assembly, homopentamer. It depends on NADP(+) as a cofactor.

The catalysed reaction is ADP-D-glycero-beta-D-manno-heptose = ADP-L-glycero-beta-D-manno-heptose. It participates in nucleotide-sugar biosynthesis; ADP-L-glycero-beta-D-manno-heptose biosynthesis; ADP-L-glycero-beta-D-manno-heptose from D-glycero-beta-D-manno-heptose 7-phosphate: step 4/4. Catalyzes the interconversion between ADP-D-glycero-beta-D-manno-heptose and ADP-L-glycero-beta-D-manno-heptose via an epimerization at carbon 6 of the heptose. In Polynucleobacter necessarius subsp. necessarius (strain STIR1), this protein is ADP-L-glycero-D-manno-heptose-6-epimerase.